Reading from the N-terminus, the 144-residue chain is Large ribosomal subunit protein uL15 (144 aa).

Residues 1–52 form a disordered region; it reads MKLHTLKSTPGARVEKHRVGRGHAAGKGKQAGKGQSGQNKRHGHRLGFEGGQ. Basic residues predominate over residues 15-26; sequence EKHRVGRGHAAG.

This sequence belongs to the universal ribosomal protein uL15 family. Part of the 50S ribosomal subunit.

In terms of biological role, binds to the 23S rRNA. This Mycoplasmopsis agalactiae (strain NCTC 10123 / CIP 59.7 / PG2) (Mycoplasma agalactiae) protein is Large ribosomal subunit protein uL15.